A 209-amino-acid chain; its full sequence is Orotate phosphoribosyltransferase (209 aa).

5-phospho-alpha-D-ribose 1-diphosphate contacts are provided by residues arginine 96, lysine 100, histidine 102, and 122-130 (EDLISTGGS). Serine 126 contacts orotate.

Belongs to the purine/pyrimidine phosphoribosyltransferase family. PyrE subfamily. As to quaternary structure, homodimer. It depends on Mg(2+) as a cofactor.

The catalysed reaction is orotidine 5'-phosphate + diphosphate = orotate + 5-phospho-alpha-D-ribose 1-diphosphate. It functions in the pathway pyrimidine metabolism; UMP biosynthesis via de novo pathway; UMP from orotate: step 1/2. Its function is as follows. Catalyzes the transfer of a ribosyl phosphate group from 5-phosphoribose 1-diphosphate to orotate, leading to the formation of orotidine monophosphate (OMP). The sequence is that of Orotate phosphoribosyltransferase from Streptococcus pyogenes serotype M1.